Consider the following 269-residue polypeptide: Ubiquinone/menaquinone biosynthesis C-methyltransferase UbiE (269 aa).

Residues T92, D113, and 141-142 (NA) contribute to the S-adenosyl-L-methionine site.

It belongs to the class I-like SAM-binding methyltransferase superfamily. MenG/UbiE family.

It carries out the reaction a 2-demethylmenaquinol + S-adenosyl-L-methionine = a menaquinol + S-adenosyl-L-homocysteine + H(+). The enzyme catalyses a 2-methoxy-6-(all-trans-polyprenyl)benzene-1,4-diol + S-adenosyl-L-methionine = a 5-methoxy-2-methyl-3-(all-trans-polyprenyl)benzene-1,4-diol + S-adenosyl-L-homocysteine + H(+). Its pathway is quinol/quinone metabolism; menaquinone biosynthesis; menaquinol from 1,4-dihydroxy-2-naphthoate: step 2/2. It functions in the pathway cofactor biosynthesis; ubiquinone biosynthesis. Its function is as follows. Methyltransferase required for the conversion of demethylmenaquinol (DMKH2) to menaquinol (MKH2) and the conversion of 2-polyprenyl-6-methoxy-1,4-benzoquinol (DDMQH2) to 2-polyprenyl-3-methyl-6-methoxy-1,4-benzoquinol (DMQH2). In Brucella suis (strain ATCC 23445 / NCTC 10510), this protein is Ubiquinone/menaquinone biosynthesis C-methyltransferase UbiE.